We begin with the raw amino-acid sequence, 588 residues long: Polyphenol oxidase II, chloroplastic (588 aa).

Residues Met-1–Thr-10 are compositionally biased toward polar residues. A disordered region spans residues Met-1–Lys-32. Residues Met-1 to Ser-50 constitute a chloroplast transit peptide. Over residues Thr-16 to Pro-29 the composition is skewed to low complexity. Residues Cys-51–Ala-88 constitute a thylakoid transit peptide. Cystine bridges form between Cys-99-Cys-116 and Cys-115-Cys-179. Cu cation contacts are provided by His-178, His-199, His-208, His-330, His-334, and His-366. A cross-link (2'-(S-cysteinyl)-histidine (Cys-His)) is located at residues Cys-182 to His-199.

The protein belongs to the tyrosinase family. As to quaternary structure, monomer. Cu(2+) is required as a cofactor.

The protein localises to the plastid. It localises to the chloroplast thylakoid lumen. It catalyses the reaction 2 catechol + O2 = 2 1,2-benzoquinone + 2 H2O. In terms of biological role, catalyzes the oxidation of mono- and o-diphenols to o-diquinones. The polypeptide is Polyphenol oxidase II, chloroplastic (co-2) (Ipomoea batatas (Sweet potato)).